The following is a 377-amino-acid chain: 26S proteasome non-ATPase regulatory subunit 4 (377 aa).

Positions 5–188 (STMVCVDNSE…LADALISSPI (184 aa)) constitute a VWFA domain. A Glycyl lysine isopeptide (Lys-Gly) (interchain with G-Cter in SUMO2) cross-link involves residue K122. Residues 197–262 (LGLGASDFEF…TEDSDDALLK (66 aa)) form an interaction with UBQLN1 region. In terms of domain architecture, UIM 1 spans 211–230 (SADPELALALRVSMEEQRQR). Residues 216-220 (LALAL) form an essential for ubiquitin-binding region. Residues 224 to 237 (MEEQRQRQEEEARR) are compositionally biased toward basic and acidic residues. Positions 224 to 255 (MEEQRQRQEEEARRAAAASAAEAGIATTGTED) are disordered. Phosphothreonine occurs at positions 250 and 253. Phosphoserine occurs at positions 256 and 266. Positions 282 to 301 (TEEEQIAYAMQMSLQGAEFG) constitute a UIM 2 domain. Residues 287-291 (IAYAM) form an essential for ubiquitin-binding region. Disordered regions lie at residues 300 to 327 (FGQA…DDYD) and 341 to 377 (NLPG…EDKK). Phosphoserine occurs at positions 358 and 361. Over residues 365 to 377 (KDGKKDKKEEDKK) the composition is skewed to basic and acidic residues.

It belongs to the proteasome subunit S5A family. As to quaternary structure, component of the 19S proteasome regulatory particle complex. The 26S proteasome consists of a 20S core particle (CP) and two 19S regulatory subunits (RP). The regulatory particle is made of a lid composed of 9 subunits, a base containing 6 ATPases and few additional components including PSMD4. Interacts with NUB1. Interacts with SQSTM1. Interacts with UBQLN4. Interacts with UBE3A. Interacts with UBQLN1 (via ubiquitin-like domain). Interacts with DDI2.

Component of the 26S proteasome, a multiprotein complex involved in the ATP-dependent degradation of ubiquitinated proteins. This complex plays a key role in the maintenance of protein homeostasis by removing misfolded or damaged proteins, which could impair cellular functions, and by removing proteins whose functions are no longer required. Therefore, the proteasome participates in numerous cellular processes, including cell cycle progression, apoptosis, or DNA damage repair. PSMD4 acts as an ubiquitin receptor subunit through ubiquitin-interacting motifs and selects ubiquitin-conjugates for destruction. Displays a preferred selectivity for longer polyubiquitin chains. In Homo sapiens (Human), this protein is 26S proteasome non-ATPase regulatory subunit 4 (PSMD4).